We begin with the raw amino-acid sequence, 315 residues long: MANLKAIRDRIQSVKNTKKITEAMRLVAAARVRRAQEQVLATRPFADRLAQVLYGLQSRLRFEEANLPLLRKREVKSVGLLVISGDRGLCGGYNNNVIRRAENRAKEIKAEGLNYQFVLVGRKSTQYFQRRDQPIDATYSGLEQIPTAAEANQIADQLLSLFLSEEVDRIELIYTRFLSLVSSRPVVQTLLPLDPQGLEAADDEIFRLTTRGGKFEVEREKVASQVRPLAPDMIFEQDPVQILDSLLPLYLSNQLLRALQESAASELAARMTAMSNASENAGELINTLTLSYNKARQAAITQELLEVVGGAEALT.

It belongs to the ATPase gamma chain family. As to quaternary structure, F-type ATPases have 2 components, CF(1) - the catalytic core - and CF(0) - the membrane proton channel. CF(1) has five subunits: alpha(3), beta(3), gamma(1), delta(1), epsilon(1). CF(0) has three main subunits: a, b and c.

The protein localises to the cellular thylakoid membrane. Produces ATP from ADP in the presence of a proton gradient across the membrane. The gamma chain is believed to be important in regulating ATPase activity and the flow of protons through the CF(0) complex. This Nostoc punctiforme (strain ATCC 29133 / PCC 73102) protein is ATP synthase gamma chain.